A 122-amino-acid chain; its full sequence is Large ribosomal subunit protein bL19 (122 aa).

The protein belongs to the bacterial ribosomal protein bL19 family.

Functionally, this protein is located at the 30S-50S ribosomal subunit interface and may play a role in the structure and function of the aminoacyl-tRNA binding site. The polypeptide is Large ribosomal subunit protein bL19 (rplS) (Synechocystis sp. (strain ATCC 27184 / PCC 6803 / Kazusa)).